The sequence spans 285 residues: Acetyl-coenzyme A carboxylase carboxyl transferase subunit beta (285 aa).

One can recognise a CoA carboxyltransferase N-terminal domain in the interval 24–285; sequence GLWYKSPTGK…DLIQNQPVRA (262 aa).

Belongs to the AccD/PCCB family. As to quaternary structure, acetyl-CoA carboxylase is a heterohexamer composed of biotin carboxyl carrier protein (AccB), biotin carboxylase (AccC) and two subunits each of ACCase subunit alpha (AccA) and ACCase subunit beta (AccD).

The protein resides in the cytoplasm. It carries out the reaction N(6)-carboxybiotinyl-L-lysyl-[protein] + acetyl-CoA = N(6)-biotinyl-L-lysyl-[protein] + malonyl-CoA. Its pathway is lipid metabolism; malonyl-CoA biosynthesis; malonyl-CoA from acetyl-CoA: step 1/1. Its function is as follows. Component of the acetyl coenzyme A carboxylase (ACC) complex. Biotin carboxylase (BC) catalyzes the carboxylation of biotin on its carrier protein (BCCP) and then the CO(2) group is transferred by the transcarboxylase to acetyl-CoA to form malonyl-CoA. This chain is Acetyl-coenzyme A carboxylase carboxyl transferase subunit beta, found in Christiangramia forsetii (strain DSM 17595 / CGMCC 1.15422 / KT0803) (Gramella forsetii).